We begin with the raw amino-acid sequence, 259 residues long: HTH-type quorum sensing-dependent transcriptional regulator VjbR (259 aa).

Positions 76–179 (KNYFAIDPVF…AGIIHGTVCG (104 aa)) are C12-HSL binding. Positions 183-248 (ANSVASLLTP…SAVATALSLG (66 aa)) constitute an HTH luxR-type domain. The H-T-H motif DNA-binding region spans 207–226 (DGEIAEILSIARWTVVTYLQ).

Its function is as follows. Transcriptional regulator involved in the global control of Brucella gene expression. Mediates the effects of the quorum sensing autoinducer C12-HSL (N-dodecanoyl-homoserine lactone) on a large and diverse number of genes. This is HTH-type quorum sensing-dependent transcriptional regulator VjbR (vjbR) from Brucella ovis (strain ATCC 25840 / 63/290 / NCTC 10512).